The sequence spans 408 residues: Peptidase T (408 aa).

A Zn(2+)-binding site is contributed by histidine 78. Aspartate 80 is an active-site residue. Zn(2+) is bound at residue aspartate 140. Residue glutamate 174 is the Proton acceptor of the active site. Glutamate 175, aspartate 197, and histidine 379 together coordinate Zn(2+).

This sequence belongs to the peptidase M20B family. Zn(2+) serves as cofactor.

It is found in the cytoplasm. The catalysed reaction is Release of the N-terminal residue from a tripeptide.. Its function is as follows. Cleaves the N-terminal amino acid of tripeptides. In Staphylococcus aureus (strain Mu3 / ATCC 700698), this protein is Peptidase T.